The sequence spans 588 residues: D-3-phosphoglycerate dehydrogenase 3, chloroplastic (588 aa).

Residues 1–38 constitute a chloroplast transit peptide; sequence MATSLNLSSIFSSSSRLVTTPSSVFPIRQRRRIILVTS. Residues 195–196, D215, 274–276, and D300 contribute to the NAD(+) site; these read KV and VAR. R276 is a catalytic residue. E305 is a catalytic residue. H324 acts as the Proton donor in catalysis. Residue 324–327 coordinates NAD(+); it reads HLGA. Residues 516-588 form the ACT domain; sequence VILCRQVDQP…AIEEFVFLKL (73 aa).

The protein belongs to the D-isomer specific 2-hydroxyacid dehydrogenase family. Expressed in aerial parts. Not detected in roots and meristematic tissue. Expressed in cotyledons, adult leaves, stigma and anther filaments. Detected in the embryo.

Its subcellular location is the plastid. The protein localises to the chloroplast. The catalysed reaction is (2R)-3-phosphoglycerate + NAD(+) = 3-phosphooxypyruvate + NADH + H(+). The protein operates within amino-acid biosynthesis; L-serine biosynthesis; L-serine from 3-phospho-D-glycerate: step 1/3. With respect to regulation, partially inhibited by 1 mM serine. Involved in the plastidial phosphorylated pathway of serine biosynthesis (PPSB). In Arabidopsis thaliana (Mouse-ear cress), this protein is D-3-phosphoglycerate dehydrogenase 3, chloroplastic (PGDH3).